The primary structure comprises 278 residues: MGQALRKLTAADYPVVVQEPRKKVLAVKGLVKAYKSQHRVLDNINFELHAGEFVAIIGRSGAGKSTLLHILNGTIPTSAGEIINYHENGDTQNIAALTTKQMRKWRAKCGMIFQDFCLVPRLDVITNVLLGRLSYTSTLKSFFKLFSEQDQARAIELLQWLNMLPHALQRAENLSGGQMQRVAICRAMMQNPKILLADEPVASLDPKNTTRIMNTLQKISENDIAVIVNLHSVDLVKDYCTRVIGIAHGRIIFDGPPSMLNDSIIQDIYSDESAELLH.

An ABC transporter domain is found at 25 to 273; it reads LAVKGLVKAY…IIQDIYSDES (249 aa). ATP is bound at residue 58–65; sequence GRSGAGKS.

It belongs to the ABC transporter superfamily. Phosphonates importer (TC 3.A.1.9.1) family. The complex is composed of two ATP-binding proteins (PhnC), two transmembrane proteins (PhnE) and a solute-binding protein (PhnD).

Its subcellular location is the cell inner membrane. It carries out the reaction phosphonate(out) + ATP + H2O = phosphonate(in) + ADP + phosphate + H(+). Functionally, part of the ABC transporter complex PhnCDE involved in phosphonates import. Responsible for energy coupling to the transport system. In Yersinia pestis bv. Antiqua (strain Antiqua), this protein is Phosphonates import ATP-binding protein PhnC.